Consider the following 850-residue polypeptide: Mitogen-activated protein kinase kinase kinase 11 (850 aa).

Position 11 is a phosphoserine (Ser-11). Residues 18–31 show a composition bias toward gly residues; sequence GSGSGGGGGSGGVR. A disordered region spans residues 18-37; the sequence is GSGSGGGGGSGGVRPEGSPK. Phosphoserine is present on Ser-35. An SH3 domain is found at 42–106; sequence YANPVWTALF…PSNYVSRGGG (65 aa). In terms of domain architecture, Protein kinase spans 118-380; sequence LRLEEVIGIG…ASILQQLEAL (263 aa). Residues 124–132 and Lys-145 contribute to the ATP site; that span reads IGIGGFGKV. Catalysis depends on Asp-242, which acts as the Proton acceptor. A Phosphothreonine; by autocatalysis modification is found at Thr-278. Ser-282 is subject to Phosphoserine; by autocatalysis and MAP4K1. Ser-395 is subject to Phosphoserine. 2 leucine-zipper regions span residues 404–425 and 439–460; these read IQGL…EEEL and LRRR…ELTL. Phosphoserine occurs at positions 508, 525, 549, 556, and 557. Positions 536-850 are disordered; sequence LEPAESGQTW…QAPWAPEAGP (315 aa). A compositionally biased stretch (basic and acidic residues) spans 551-563; sequence RRLDDSSNGERRA. Low complexity predominate over residues 598–610; that stretch reads SSPLGSPSTPPAL. At Ser-655 the chain carries Phosphoserine. Residues 677–693 show a composition bias toward pro residues; the sequence is TAPPPAQMASPCPPDLP. The residue at position 712 (Thr-712) is a Phosphothreonine. Ser-728, Ser-731, Ser-743, Ser-751, Ser-761, Ser-773, Ser-792, Ser-796, and Ser-818 each carry phosphoserine. Residues 790–802 show a composition bias toward pro residues; the sequence is RPSPLPSPQPAPR. Low complexity predominate over residues 803–819; it reads RAPWTLFPDSDPFWDSP.

It belongs to the protein kinase superfamily. STE Ser/Thr protein kinase family. MAP kinase kinase kinase subfamily. In terms of assembly, homodimer; undergoes dimerization during activation. Interacts with MAP2K4/MKK4. Interacts with MAP2K7/MKK7. Found in a complex with SH3RF1, RAC1, MAP2K7/MKK7, MAPK8IP1/JIP1 and MAPK8/JNK1. The cofactor is Mg(2+). In terms of processing, autophosphorylation on serine and threonine residues within the activation loop plays a role in enzyme activation. Thr-278 is likely to be the main autophosphorylation site. Phosphorylation of Ser-556 and Ser-557 is induced by CDC42.

The protein resides in the cytoplasm. Its subcellular location is the cytoskeleton. It is found in the microtubule organizing center. It localises to the centrosome. The catalysed reaction is L-seryl-[protein] + ATP = O-phospho-L-seryl-[protein] + ADP + H(+). It catalyses the reaction L-threonyl-[protein] + ATP = O-phospho-L-threonyl-[protein] + ADP + H(+). With respect to regulation, homodimerization via the leucine zipper domains is required for autophosphorylation and subsequent activation. Functionally, activates the JUN N-terminal pathway. Required for serum-stimulated cell proliferation and for mitogen and cytokine activation of MAPK14 (p38), MAPK3 (ERK) and MAPK8 (JNK1) through phosphorylation and activation of MAP2K4/MKK4 and MAP2K7/MKK7. Plays a role in mitogen-stimulated phosphorylation and activation of BRAF, but does not phosphorylate BRAF directly. Influences microtubule organization during the cell cycle. The chain is Mitogen-activated protein kinase kinase kinase 11 (Map3k11) from Rattus norvegicus (Rat).